The chain runs to 146 residues: Anti-sigma F factor (146 aa).

This sequence belongs to the anti-sigma-factor family.

It carries out the reaction L-seryl-[protein] + ATP = O-phospho-L-seryl-[protein] + ADP + H(+). The enzyme catalyses L-threonyl-[protein] + ATP = O-phospho-L-threonyl-[protein] + ADP + H(+). In terms of biological role, binds to sigma F and blocks its ability to form an RNA polymerase holoenzyme (E-sigma F). Phosphorylates SpoIIAA on a serine residue. This phosphorylation may enable SpoIIAA to act as an anti-anti-sigma factor that counteracts SpoIIAB and thus releases sigma F from inhibition. The sequence is that of Anti-sigma F factor from Bacillus licheniformis.